The primary structure comprises 118 residues: MPRPPKCRWVRSEPNVTHFKPVGVPMSMLDEVILTVEELEAIRLKDLEGLEQEECAEMMKVSRPTFFRIINSARQKVADALVNGKAIRVEGGNYRVYDEDQRGHRGMRHRHGQWGRED.

The protein belongs to the UPF0251 family.

The polypeptide is UPF0251 protein Teth39_0655 (Thermoanaerobacter pseudethanolicus (strain ATCC 33223 / 39E) (Clostridium thermohydrosulfuricum)).